The following is a 251-amino-acid chain: MTMLNGLRILDTLPLAALEVGKHWYWEIGNLKLHGQVFMASWVVIALLIIASLLATRNIQRVPSGMQNFMEYVLEFLRDLARTQLGEKHYRPWLPFIGTLFLFIFVSNWSGSLIPWRLIEIPEGELAAPTNDINTTVALALLTSLAYFYAGLSKKGLGYFANYVQPIPVLLPIKILEDFTKPLSLSFRLFGNILADELVVAVLVFLVPLFVPLPLMALGLFTSAIQALVFATLAGAYIHEAIESEEEEEHA.

5 helical membrane passes run glycine 35–alanine 55, leucine 94–isoleucine 114, isoleucine 133–serine 153, leucine 198–leucine 218, and glycine 219–histidine 239.

The protein belongs to the ATPase A chain family. As to quaternary structure, F-type ATPases have 2 components, CF(1) - the catalytic core - and CF(0) - the membrane proton channel. CF(1) has five subunits: alpha(3), beta(3), gamma(1), delta(1), epsilon(1). CF(0) has four main subunits: a, b, b' and c.

It localises to the cellular thylakoid membrane. In terms of biological role, key component of the proton channel; it plays a direct role in the translocation of protons across the membrane. This Crocosphaera subtropica (strain ATCC 51142 / BH68) (Cyanothece sp. (strain ATCC 51142)) protein is ATP synthase subunit a 2.